The chain runs to 109 residues: Fluoride-specific ion channel FluC 1 (109 aa).

The next 4 membrane-spanning stretches (helical) occupy residues 1 to 21 (MVIV…YFFS), 29 to 49 (LPLG…VFYN), 55 to 75 (EVYA…STLN), and 87 to 107 (VFYS…FLGI). Positions 66 and 69 each coordinate Na(+).

It belongs to the fluoride channel Fluc/FEX (TC 1.A.43) family.

The protein resides in the cell membrane. The catalysed reaction is fluoride(in) = fluoride(out). Its activity is regulated as follows. Na(+) is not transported, but it plays an essential structural role and its presence is essential for fluoride channel function. Fluoride-specific ion channel. Important for reducing fluoride concentration in the cell, thus reducing its toxicity. The sequence is that of Fluoride-specific ion channel FluC 1 from Streptococcus pneumoniae serotype 4 (strain ATCC BAA-334 / TIGR4).